The chain runs to 294 residues: 4-hydroxy-tetrahydrodipicolinate synthase (294 aa).

A pyruvate-binding site is contributed by threonine 47. The active-site Proton donor/acceptor is tyrosine 135. Lysine 163 (schiff-base intermediate with substrate) is an active-site residue. Residue threonine 205 coordinates pyruvate.

It belongs to the DapA family. In terms of assembly, homotetramer; dimer of dimers.

The protein resides in the cytoplasm. It catalyses the reaction L-aspartate 4-semialdehyde + pyruvate = (2S,4S)-4-hydroxy-2,3,4,5-tetrahydrodipicolinate + H2O + H(+). The protein operates within amino-acid biosynthesis; L-lysine biosynthesis via DAP pathway; (S)-tetrahydrodipicolinate from L-aspartate: step 3/4. Functionally, catalyzes the condensation of (S)-aspartate-beta-semialdehyde [(S)-ASA] and pyruvate to 4-hydroxy-tetrahydrodipicolinate (HTPA). In Rickettsia montanensis, this protein is 4-hydroxy-tetrahydrodipicolinate synthase.